A 297-amino-acid chain; its full sequence is Protoheme IX farnesyltransferase (297 aa).

9 helical membrane-spanning segments follow: residues 23–43 (VTQL…PGMP), 49–69 (VFGT…NCLI), 93–113 (IQVL…LYHL), 117–137 (LTMW…TVIL), 144–164 (NIVI…AAVA), 171–191 (AWVL…ALAL), 215–235 (RLHI…PYAI), 238–258 (SGAL…WYAW), and 275–295 (FSIL…WVGL).

The protein belongs to the UbiA prenyltransferase family. Protoheme IX farnesyltransferase subfamily.

It is found in the cell inner membrane. It carries out the reaction heme b + (2E,6E)-farnesyl diphosphate + H2O = Fe(II)-heme o + diphosphate. It functions in the pathway porphyrin-containing compound metabolism; heme O biosynthesis; heme O from protoheme: step 1/1. Its function is as follows. Converts heme B (protoheme IX) to heme O by substitution of the vinyl group on carbon 2 of heme B porphyrin ring with a hydroxyethyl farnesyl side group. The sequence is that of Protoheme IX farnesyltransferase from Bordetella bronchiseptica (strain ATCC BAA-588 / NCTC 13252 / RB50) (Alcaligenes bronchisepticus).